The sequence spans 89 residues: Large ribosomal subunit protein bL27 (89 aa).

The disordered stretch occupies residues 1-23 (MAHKKAGGSSRNGRDSESKRLGV).

It belongs to the bacterial ribosomal protein bL27 family.

The chain is Large ribosomal subunit protein bL27 from Rhizobium meliloti (strain 1021) (Ensifer meliloti).